The sequence spans 126 residues: Protein ApaG (126 aa).

The 125-residue stretch at 2–126 (SQLTSSVRVD…FRLSIPGLLH (125 aa)) folds into the ApaG domain.

The sequence is that of Protein ApaG from Shewanella halifaxensis (strain HAW-EB4).